Reading from the N-terminus, the 699-residue chain is Glycine--tRNA ligase beta subunit (699 aa).

The protein belongs to the class-II aminoacyl-tRNA synthetase family. As to quaternary structure, tetramer of two alpha and two beta subunits.

The protein resides in the cytoplasm. It catalyses the reaction tRNA(Gly) + glycine + ATP = glycyl-tRNA(Gly) + AMP + diphosphate. This is Glycine--tRNA ligase beta subunit from Methylobacterium radiotolerans (strain ATCC 27329 / DSM 1819 / JCM 2831 / NBRC 15690 / NCIMB 10815 / 0-1).